A 263-amino-acid chain; its full sequence is Mediator of RNA polymerase II transcription subunit 4 (263 aa).

Residues 61 to 111 adopt a coiled-coil conformation; the sequence is LQLAAEQAGIEKNMDALREQVRKQDEEINQLQRQLKEAEQILATSIFQARQ. 2 disordered regions span residues 209-228 and 235-263; these read APNQFAWHPSGELHMSMGAG and DTRAHKDASQDDVEVMSTESSSSSSSDSQ. The span at 251–263 shows a compositional bias: low complexity; it reads STESSSSSSSDSQ.

It belongs to the Mediator complex subunit 4 family. In terms of assembly, component of the Mediator complex.

It is found in the nucleus. Functionally, component of the Mediator complex, a coactivator involved in the regulated transcription of nearly all RNA polymerase II-dependent genes. Mediator functions as a bridge to convey information from gene-specific regulatory proteins to the basal RNA polymerase II transcription machinery. Mediator is recruited to promoters by direct interactions with regulatory proteins and serves as a scaffold for the assembly of a functional preinitiation complex with RNA polymerase II and the general transcription factors. The polypeptide is Mediator of RNA polymerase II transcription subunit 4 (MED4) (Anopheles gambiae (African malaria mosquito)).